Here is a 32-residue protein sequence, read N- to C-terminus: Cytochrome b6-f complex subunit 7 (32 aa).

Residues 9 to 27 traverse the membrane as a helical segment; sequence AAVFWVLIPVGLLGGVLLL.

Belongs to the PetM family. The 4 large subunits of the cytochrome b6-f complex are cytochrome b6, subunit IV (17 kDa polypeptide, PetD), cytochrome f and the Rieske protein, while the 4 small subunits are PetG, PetL, PetM and PetN. The complex functions as a dimer.

It localises to the cellular thylakoid membrane. Its function is as follows. Component of the cytochrome b6-f complex, which mediates electron transfer between photosystem II (PSII) and photosystem I (PSI), cyclic electron flow around PSI, and state transitions. The protein is Cytochrome b6-f complex subunit 7 of Prochlorococcus marinus (strain NATL1A).